We begin with the raw amino-acid sequence, 169 residues long: Peptide deformylase (169 aa).

Fe cation-binding residues include cysteine 91 and histidine 133. Glutamate 134 is an active-site residue. Histidine 137 is a Fe cation binding site.

This sequence belongs to the polypeptide deformylase family. The cofactor is Fe(2+).

It catalyses the reaction N-terminal N-formyl-L-methionyl-[peptide] + H2O = N-terminal L-methionyl-[peptide] + formate. In terms of biological role, removes the formyl group from the N-terminal Met of newly synthesized proteins. Requires at least a dipeptide for an efficient rate of reaction. N-terminal L-methionine is a prerequisite for activity but the enzyme has broad specificity at other positions. This chain is Peptide deformylase, found in Pectobacterium atrosepticum (strain SCRI 1043 / ATCC BAA-672) (Erwinia carotovora subsp. atroseptica).